Consider the following 360-residue polypeptide: Phospho-N-acetylmuramoyl-pentapeptide-transferase (360 aa).

The Periplasmic portion of the chain corresponds to 1-25 (MLVWLAEHLVKYYSGFNVFSYLTFR). Residues 26–46 (AIVSLLTALFISLWMGPRMIA) form a helical membrane-spanning segment. Residues 47–71 (HLQKLSFGQVVRNDGPESHFSKRGT) are Cytoplasmic-facing. The helical transmembrane segment at 72–92 (PTMGGIMILTAIVISVLLWAY) threads the bilayer. Position 93 (P93) is a topological domain, periplasmic. A helical membrane pass occupies residues 94 to 114 (SNPYVWCVLVVLVGYGIIGFV). Topologically, residues 115–131 (DDYRKVVRKDTKGLIAR) are cytoplasmic. Residues 132–152 (WKYFWMSVIALGVAFALYLAG) form a helical membrane-spanning segment. The Periplasmic portion of the chain corresponds to 153–167 (KDTPATQLVVPFFKD). Residues 168-188 (VMPQLGLFYILLAYFVIVGTG) traverse the membrane as a helical segment. Residues 189-198 (NAVNLTDGLD) are Cytoplasmic-facing. A helical transmembrane segment spans residues 199–219 (GLAIMPTVFVAGGFALVAWAT). Over 220-235 (GNMNFASYLHIPYLRH) the chain is Periplasmic. Residues 236–256 (AGELVIVCTAIVGAGLGFLWF) form a helical membrane-spanning segment. Residues 257-262 (NTYPAQ) lie on the Cytoplasmic side of the membrane. Residues 263-283 (VFMGDVGSLALGGALGIIAVL) form a helical membrane-spanning segment. The Periplasmic portion of the chain corresponds to 284 to 287 (LRQE). A helical membrane pass occupies residues 288-308 (FLLVIMGGVFVVETLSVILQV). Over 309 to 337 (GSFKLRGQRIFRMAPIHHHYELKGWPEPR) the chain is Cytoplasmic. A helical transmembrane segment spans residues 338–358 (VIVRFWIISLMLVLIGLATLK). Residues 359-360 (VR) lie on the Periplasmic side of the membrane.

The protein belongs to the glycosyltransferase 4 family. MraY subfamily. The cofactor is Mg(2+).

The protein resides in the cell inner membrane. The catalysed reaction is UDP-N-acetyl-alpha-D-muramoyl-L-alanyl-gamma-D-glutamyl-meso-2,6-diaminopimeloyl-D-alanyl-D-alanine + di-trans,octa-cis-undecaprenyl phosphate = di-trans,octa-cis-undecaprenyl diphospho-N-acetyl-alpha-D-muramoyl-L-alanyl-D-glutamyl-meso-2,6-diaminopimeloyl-D-alanyl-D-alanine + UMP. It functions in the pathway cell wall biogenesis; peptidoglycan biosynthesis. Its function is as follows. Catalyzes the initial step of the lipid cycle reactions in the biosynthesis of the cell wall peptidoglycan: transfers peptidoglycan precursor phospho-MurNAc-pentapeptide from UDP-MurNAc-pentapeptide onto the lipid carrier undecaprenyl phosphate, yielding undecaprenyl-pyrophosphoryl-MurNAc-pentapeptide, known as lipid I. This is Phospho-N-acetylmuramoyl-pentapeptide-transferase from Escherichia coli O7:K1 (strain IAI39 / ExPEC).